The sequence spans 227 residues: Class I hydrophobin A (227 aa).

An N-terminal signal peptide occupies residues 1–18 (MQFSLSAIVLGLAATVYA). N50 carries an N-linked (GlcNAc...) asparagine glycan. Cystine bridges form between C60/C138, C68/C132, and C69/C109.

The protein belongs to the fungal hydrophobin family.

It localises to the secreted. It is found in the cell wall. In terms of biological role, aerial growth, conidiation, and dispersal of filamentous fungi in the environment rely upon a capability of their secreting small amphipathic proteins called hydrophobins (HPBs) with low sequence identity. Class I can self-assemble into an outermost layer of rodlet bundles on aerial cell surfaces, conferring cellular hydrophobicity that supports fungal growth, development and dispersal; whereas Class II form highly ordered films at water-air interfaces through intermolecular interactions but contribute nothing to the rodlet structure. In P.expansum, hydrophobins contribute to germination, tolerance to cold stress and mycotoxins patulin and citrinin production. HfbA and HfbB are essential for fungal surface hydrophobicity and HfbA mediates air and water dispersal. This Penicillium expansum (Blue mold rot fungus) protein is Class I hydrophobin A.